Here is a 130-residue protein sequence, read N- to C-terminus: Large ribosomal subunit protein uL22 (130 aa).

Belongs to the universal ribosomal protein uL22 family. In terms of assembly, part of the 50S ribosomal subunit.

This protein binds specifically to 23S rRNA; its binding is stimulated by other ribosomal proteins, e.g. L4, L17, and L20. It is important during the early stages of 50S assembly. It makes multiple contacts with different domains of the 23S rRNA in the assembled 50S subunit and ribosome. In terms of biological role, the globular domain of the protein is located near the polypeptide exit tunnel on the outside of the subunit, while an extended beta-hairpin is found that lines the wall of the exit tunnel in the center of the 70S ribosome. This is Large ribosomal subunit protein uL22 from Clavibacter sepedonicus (Clavibacter michiganensis subsp. sepedonicus).